Here is a 319-residue protein sequence, read N- to C-terminus: L-lactate dehydrogenase 2 (319 aa).

Residues valine 16, aspartate 37, lysine 42, tyrosine 68, and 82–83 (GA) contribute to the NAD(+) site. Substrate-binding residues include glutamine 85 and arginine 91. NAD(+) is bound by residues serine 104, 121 to 123 (AAN), and serine 146. Substrate is bound at residue 123–126 (NPVD). Residue 151 to 154 (DSAR) participates in substrate binding. The active-site Proton acceptor is histidine 178. A Phosphotyrosine modification is found at tyrosine 222. Threonine 231 contributes to the substrate binding site.

The protein belongs to the LDH/MDH superfamily. LDH family. Homotetramer.

It localises to the cytoplasm. It catalyses the reaction (S)-lactate + NAD(+) = pyruvate + NADH + H(+). It functions in the pathway fermentation; pyruvate fermentation to lactate; (S)-lactate from pyruvate: step 1/1. Its function is as follows. Catalyzes the conversion of lactate to pyruvate (Potential). Contributes to S.aureus growth during nitrosative stress in both aerobically and anaerobically cultured cells, despite playing a secondary role in this resistance mechanism. The chain is L-lactate dehydrogenase 2 from Staphylococcus aureus (strain USA300).